The following is a 415-amino-acid chain: Small ribosomal subunit protein uS5m (415 aa).

The interval 1–31 (MRRSGPELWKTLTSVSKSGQKKGRRNTRQPV) is disordered. The S5 DRBM domain occupies 131-197 (FETYCLEVKR…GMASRKIFHV (67 aa)). Residues 396-415 (GVEPMPLGIGLSHVVPKKDD) are disordered.

It belongs to the universal ribosomal protein uS5 family. Component of the mitochondrial ribosome small subunit (28S) which comprises a 12S rRNA and about 30 distinct proteins.

It localises to the mitochondrion. This is Small ribosomal subunit protein uS5m (mrps-5) from Caenorhabditis briggsae.